The primary structure comprises 89 residues: RNA-binding protein Hfq (89 aa).

In terms of domain architecture, Sm spans 9–68 (DPFLNALRRERVPVSIYLVNGIKLQGQVESFDQFVILLKNTVSQMVYKHAISTVVPARAL).

The protein belongs to the Hfq family. In terms of assembly, homohexamer.

Functionally, RNA chaperone that binds small regulatory RNA (sRNAs) and mRNAs to facilitate mRNA translational regulation in response to envelope stress, environmental stress and changes in metabolite concentrations. Also binds with high specificity to tRNAs. In Shewanella denitrificans (strain OS217 / ATCC BAA-1090 / DSM 15013), this protein is RNA-binding protein Hfq.